The following is an 803-amino-acid chain: Nucleoporin nup82 (803 aa).

In terms of assembly, component of the nuclear pore complex (NPC). NPC constitutes the exclusive means of nucleocytoplasmic transport. NPCs allow the passive diffusion of ions and small molecules and the active, nuclear transport receptor-mediated bidirectional transport of macromolecules such as proteins, RNAs, ribonucleoparticles (RNPs), and ribosomal subunits across the nuclear envelope.

The protein resides in the nucleus. It localises to the nuclear pore complex. It is found in the nucleus membrane. Functionally, functions as a component of the nuclear pore complex (NPC). NPC components, collectively referred to as nucleoporins (NUPs), can play the role of both NPC structural components and of docking or interaction partners for transiently associated nuclear transport factors. This is Nucleoporin nup82 from Schizosaccharomyces pombe (strain 972 / ATCC 24843) (Fission yeast).